Consider the following 217-residue polypeptide: Thymidylate kinase (217 aa).

11 to 18 (GLEGAGKS) provides a ligand contact to ATP.

This sequence belongs to the thymidylate kinase family.

The enzyme catalyses dTMP + ATP = dTDP + ADP. Phosphorylation of dTMP to form dTDP in both de novo and salvage pathways of dTTP synthesis. The polypeptide is Thymidylate kinase (Alkalilimnicola ehrlichii (strain ATCC BAA-1101 / DSM 17681 / MLHE-1)).